We begin with the raw amino-acid sequence, 566 residues long: Mucin-21 (566 aa).

Positions 1 to 24 (MKMQKGNVLLMFGLLLHLEAATNS) are cleaved as a signal peptide. N25 carries an N-linked (GlcNAc...) asparagine glycan. Residues 25–68 (NETSTSANTGSSVISSGASTATNSGSSVTSSGVSTATISGSSVT) are disordered. Residues 25-479 (NETSTSANTG…KPGGSLVPWE (455 aa)) lie on the Extracellular side of the membrane. 28 consecutive repeat copies span residues 31-44 (ANTG…GAST), 45-59 (ATNS…GVST), 60-74 (ATIS…GVSI), 75-89 (VTNS…GIST), 90-104 (ATNS…GISI), 105-119 (ATNS…GAST), 120-134 (ATNS…GAST), 135-149 (ATNS…GAST), 150-164 (ATNS…EAST), 165-179 (ATNS…GAST), 180-194 (ATNS…RAST), 195-209 (ATNS…GAST), 210-224 (ATNS…GAGT), 225-239 (ATNS…GAST), 244-254 (ESSTPSSGAGT), 255-269 (ATNS…GAGT), 270-284 (ATNS…GIST), 285-299 (VTNS…GANT), 300-314 (ATNS…GANT), 315-329 (ATNS…GAST), 330-344 (ATNS…GAST), 345-359 (ATNS…GAST), 360-374 (ATNS…GTST), 375-389 (ATNS…GAST), 390-404 (ATTS…GAST), 405-419 (ATNS…GAST), 420-434 (ATNS…GANT), and 435-449 (ATNS…GSGT). Residues 31-435 (ANTGSSVISS…STTSSGANTA (405 aa)) are 28 X 15 AA approximate tandem repeats. Positions 106-456 (TNSESSTTSS…SGTAALTGMH (351 aa)) are disordered. A helical transmembrane segment spans residues 480–500 (IFLITLVSVVAAVGLFAGLFF). The Cytoplasmic portion of the chain corresponds to 501-566 (CVRNSLSLRN…MEMSGRNSGP (66 aa)). The cytoplasmic tail stretch occupies residues 521–566 (GLNHGLGPGPGGNHGAPHRPRWSPNWFWRRPVSSIAMEMSGRNSGP).

Post-translationally, O-glycosylated. In terms of tissue distribution, expressed in lung, large intestine, thymus, and testis. Expressed in normal and malignant bronchial epithelial cells.

The protein localises to the cell membrane. The sequence is that of Mucin-21 (MUC21) from Homo sapiens (Human).